A 229-amino-acid chain; its full sequence is Potassium/proton antiporter CemA (229 aa).

The next 4 membrane-spanning stretches (helical) occupy residues 7–27 (LIPL…SLSF), 114–134 (IICF…LVIL), 154–174 (ILLL…ELMI), and 189–209 (IISG…KYWI).

It belongs to the CemA family.

Its subcellular location is the plastid. It is found in the chloroplast inner membrane. The enzyme catalyses K(+)(in) + H(+)(out) = K(+)(out) + H(+)(in). In terms of biological role, contributes to K(+)/H(+) antiport activity by supporting proton efflux to control proton extrusion and homeostasis in chloroplasts in a light-dependent manner to modulate photosynthesis. Prevents excessive induction of non-photochemical quenching (NPQ) under continuous-light conditions. Indirectly promotes efficient inorganic carbon uptake into chloroplasts. This Fagus sylvatica (Beechnut) protein is Potassium/proton antiporter CemA.